The chain runs to 803 residues: Rho guanine nucleotide exchange factor 7 (803 aa).

Methionine 1 is modified (N-acetylmethionine). Residues 1-133 (MNSAEQTVTW…SLVTLNKVTA (133 aa)) form the Calponin-homology (CH) domain. N-acetylthreonine is present on asparagine 2. 2 positions are modified to phosphoserine: serine 153 and serine 176. The region spanning 184 to 243 (NNQLVVRAKFNFQQTNEDELSFSKGDVIHVTRVEEGGWWEGTLNGRTGWFPSNYVREVKA) is the SH3 domain. Phosphoserine is present on residues serine 249 and serine 257. Residues 271–451 (YYNVVLQNIL…KNLSAQCQEV (181 aa)) enclose the DH domain. Positions 473–578 (DIKTLGNVTY…WVEHLQKQTK (106 aa)) constitute a PH domain. Serine 518, cysteine 560, and valine 579 each carry phosphoserine. The disordered stretch occupies residues 580–655 (TSVGNPTIKP…TPKPWSLSCL (76 aa)). A compositionally biased stretch (polar residues) spans 593 to 606 (PSHTLPSHPVTPSS). Phosphoserine occurs at positions 645 and 664. A compositionally biased stretch (basic residues) spans 678 to 690 (KTMKKLLPKRKPE). 2 disordered regions span residues 678–704 (KTMK…RKST) and 748–773 (DDQP…LSED). A compositionally biased stretch (basic and acidic residues) spans 691–700 (RKPSDEEFAS). Serine 694 bears the Phosphoserine; by CaMK1 mark. Low complexity predominate over residues 752–765 (SLDSLGRRSSLSRL).

Interacts with PAK kinases through the SH3 domain. Interacts with GIT1 and TGFB1I1. Interacts with PTK2/FAK1 and RAC1. Interacts with ITCH and PARVB. Interacts with unphosphorylated PAK1. Interacts with SCRIB; interaction is direct and may play a role in regulation of apoptosis. Interacts with FRMPD4 (via N-terminus). Interacts with CaMK1. Interacts with BIN2. Interacts with YWHAZ. Interacts (via PH domain) with NOX1 (via FAD-binding FR-type domain). As to quaternary structure, interacts with SNX27. Phosphorylated by PTK2/FAK1; this promotes interaction with RAC1. Phosphorylated on Ser-694 by CaMK1; enhancement of GEF activity and downstream activation of RAC1.

It localises to the cell junction. The protein localises to the focal adhesion. Its subcellular location is the cell projection. It is found in the ruffle. The protein resides in the cytoplasm. It localises to the cell cortex. The protein localises to the lamellipodium. Functionally, acts as a RAC1 guanine nucleotide exchange factor (GEF) and can induce membrane ruffling. Functions in cell migration, attachment and cell spreading. Promotes targeting of RAC1 to focal adhesions. May function as a positive regulator of apoptosis. Downstream of NMDA receptors and CaMKK-CaMK1 signaling cascade, promotes the formation of spines and synapses in hippocampal neurons. This is Rho guanine nucleotide exchange factor 7 (ARHGEF7) from Homo sapiens (Human).